Consider the following 551-residue polypeptide: Enhancer of mRNA-decapping protein 3 (551 aa).

The region spanning 1 to 63 (MSQFVGFGVQ…LKDLKVLTVA (63 aa)) is the Sm domain. A disordered region spans residues 64 to 92 (SQSGKRKQQRQQQQQNDYNQNRGEHIDWQ). The region spanning 93 to 129 (DDDVSKIKQQEDFDFQRNLGMFNKKDVFAQLKQNDDI) is the DFDF domain. 2 positions are modified to phosphoserine: S257 and S261. Residues 288 to 527 (VQLLEMESIT…DIGIPQGAYS (240 aa)) form the YjeF N-terminal domain.

Belongs to the EDC3 family. Homodimer. Interacts with DCP2.

It is found in the cytoplasm. The protein localises to the P-body. Its function is as follows. Stimulates decapping of both stable and unstable mRNA during mRNA decay. Does not affect nonsense-mediated mRNA decay. Required for normal P-body assembly. In Saccharomyces cerevisiae (strain ATCC 204508 / S288c) (Baker's yeast), this protein is Enhancer of mRNA-decapping protein 3 (EDC3).